The following is a 441-amino-acid chain: Tol-Pal system protein TolB (441 aa).

The signal sequence occupies residues 1–39; that stretch reads MPAMTPAFRRADLTGFLRTYGAALILLLAAMLAWQPAQA.

This sequence belongs to the TolB family. In terms of assembly, the Tol-Pal system is composed of five core proteins: the inner membrane proteins TolA, TolQ and TolR, the periplasmic protein TolB and the outer membrane protein Pal. They form a network linking the inner and outer membranes and the peptidoglycan layer.

The protein localises to the periplasm. Its function is as follows. Part of the Tol-Pal system, which plays a role in outer membrane invagination during cell division and is important for maintaining outer membrane integrity. The protein is Tol-Pal system protein TolB of Bordetella bronchiseptica (strain ATCC BAA-588 / NCTC 13252 / RB50) (Alcaligenes bronchisepticus).